Reading from the N-terminus, the 199-residue chain is Interleukin-11 (199 aa).

A signal peptide spans 1-21 (MNCVCRLVLVVLSLWPDRVVA). The interval 182-190 (HLTLDWAVR) is important for interaction with IL11RA and for the stimulation of cell proliferation.

Belongs to the IL-6 superfamily. As to quaternary structure, interacts with either IL11RA1 or IL11RA2 to associate with IL6ST, giving rise to a multimeric signaling complex.

The protein resides in the secreted. Cytokine that stimulates the proliferation of hematopoietic stem cells and megakaryocyte progenitor cells and induces megakaryocyte maturation resulting in increased platelet production. Also promotes the proliferation of hepatocytes in response to liver damage. Binding to its receptor formed by IL6ST and either IL11RA1 or IL11RA2 activates a signaling cascade that promotes cell proliferation, also in the context of various cancers. Signaling leads to the activation of intracellular protein kinases and the phosphorylation of STAT3. The interaction with the membrane-bound IL11RA and IL6ST stimulates 'classic signaling', whereas the binding of IL11 and soluble IL11RA to IL6ST stimulates 'trans-signaling'. The protein is Interleukin-11 of Mus musculus (Mouse).